Here is a 321-residue protein sequence, read N- to C-terminus: tRNA U34 carboxymethyltransferase (321 aa).

Carboxy-S-adenosyl-L-methionine contacts are provided by residues Lys90, Trp104, Lys109, Gly129, 151-153 (DPT), 180-181 (IE), Met195, Tyr199, and Arg314.

Belongs to the class I-like SAM-binding methyltransferase superfamily. CmoB family. As to quaternary structure, homotetramer.

It catalyses the reaction carboxy-S-adenosyl-L-methionine + 5-hydroxyuridine(34) in tRNA = 5-carboxymethoxyuridine(34) in tRNA + S-adenosyl-L-homocysteine + H(+). Its function is as follows. Catalyzes carboxymethyl transfer from carboxy-S-adenosyl-L-methionine (Cx-SAM) to 5-hydroxyuridine (ho5U) to form 5-carboxymethoxyuridine (cmo5U) at position 34 in tRNAs. In Haemophilus influenzae (strain PittEE), this protein is tRNA U34 carboxymethyltransferase.